The chain runs to 93 residues: Red pigment-concentrating hormone (93 aa).

A signal peptide spans 1 to 21 (MVRAVVATLLVVLVVASCVSA). Gln-22 bears the Pyrrolidone carboxylic acid mark. Residue Trp-29 is modified to Tryptophan amide. A propeptide spanning residues 33–93 (AAAGGEGTGM…VQCQDEEYLG (61 aa)) is cleaved from the precursor. The tract at residues 34–56 (AAGGEGTGMHPPAGAVVPPPSSL) is disordered.

This sequence belongs to the AKH/HRTH/RPCH family. In terms of tissue distribution, strongly expressed in the eyestalk and weakly in brain. Not expressed in other tissues tested.

The protein resides in the secreted. This hormone adapts the animal to light backgrounds by stimulating concentration of the pigment of its red body-chromatophores. In Penaeus monodon (Giant tiger prawn), this protein is Red pigment-concentrating hormone.